Consider the following 301-residue polypeptide: Pantothenate synthetase (301 aa).

30–37 lines the ATP pocket; that stretch reads MGNLHEGH. Catalysis depends on His37, which acts as the Proton donor. A (R)-pantoate-binding site is contributed by Gln61. Gln61 lines the beta-alanine pocket. 149 to 152 serves as a coordination point for ATP; the sequence is GEKD. Gln155 is a binding site for (R)-pantoate. ATP-binding positions include Val178 and 186–189; that span reads MSSR.

This sequence belongs to the pantothenate synthetase family. Homodimer.

Its subcellular location is the cytoplasm. It catalyses the reaction (R)-pantoate + beta-alanine + ATP = (R)-pantothenate + AMP + diphosphate + H(+). It participates in cofactor biosynthesis; (R)-pantothenate biosynthesis; (R)-pantothenate from (R)-pantoate and beta-alanine: step 1/1. Functionally, catalyzes the condensation of pantoate with beta-alanine in an ATP-dependent reaction via a pantoyl-adenylate intermediate. The polypeptide is Pantothenate synthetase (Vibrio vulnificus (strain CMCP6)).